A 200-amino-acid chain; its full sequence is Large ribosomal subunit protein bL25 (200 aa).

Belongs to the bacterial ribosomal protein bL25 family. CTC subfamily. As to quaternary structure, part of the 50S ribosomal subunit; part of the 5S rRNA/L5/L18/L25 subcomplex. Contacts the 5S rRNA. Binds to the 5S rRNA independently of L5 and L18.

Functionally, this is one of the proteins that binds to the 5S RNA in the ribosome where it forms part of the central protuberance. This is Large ribosomal subunit protein bL25 from Pseudomonas fluorescens (strain SBW25).